The sequence spans 451 residues: Acetylornithine aminotransferase, mitochondrial (451 aa).

Lysine 302 carries the N6-(pyridoxal phosphate)lysine modification.

Belongs to the class-III pyridoxal-phosphate-dependent aminotransferase family. The cofactor is pyridoxal 5'-phosphate. Found at highest levels in nodules, confined to the infected cells.

The protein resides in the mitochondrion. The catalysed reaction is N(2)-acetyl-L-ornithine + 2-oxoglutarate = N-acetyl-L-glutamate 5-semialdehyde + L-glutamate. It functions in the pathway amino-acid biosynthesis; L-arginine biosynthesis; N(2)-acetyl-L-ornithine from L-glutamate: step 4/4. Involved in the biosynthesis of citrulline. This chain is Acetylornithine aminotransferase, mitochondrial (AG118), found in Alnus glutinosa (European alder).